The chain runs to 396 residues: MAKLDAYFGEYGGQYVPQILVPALEQLEQAFIDAQEDPDFRAEFMTLLQEYAGRPTALTLCRNLTKGTKTKLYLKREDLLHGGAHKTNQVLGQALLAKRMGKDEIIAETGAGQHGVATALACALLGLKCRVYMGAKDVERQSPNVFRMELMGAEVIPVHSGSATLKDACNEALRDWSATYETAHYLLGTAAGPHPFPTIVREFQRMIGEETKMQILAREGRLPDAVIACVGGGSNAIGMFADFIEEESVKLIGVEPAGKGIDTDQHGAPLKHGKTGIFFGMKAPLMQDEHGQIEESYSVSAGLDFPSVGPQHAHLNAIGRAEYGAVTDDEALEAFKILARNEGIIPALESSHALAYALQLAQAEPEKEQLLVVNLSGRGDKDIFTVHDILKEKGEI.

An N6-(pyridoxal phosphate)lysine modification is found at Lys-86.

This sequence belongs to the TrpB family. Tetramer of two alpha and two beta chains. Requires pyridoxal 5'-phosphate as cofactor.

The enzyme catalyses (1S,2R)-1-C-(indol-3-yl)glycerol 3-phosphate + L-serine = D-glyceraldehyde 3-phosphate + L-tryptophan + H2O. It functions in the pathway amino-acid biosynthesis; L-tryptophan biosynthesis; L-tryptophan from chorismate: step 5/5. Its function is as follows. The beta subunit is responsible for the synthesis of L-tryptophan from indole and L-serine. This chain is Tryptophan synthase beta chain, found in Aliivibrio fischeri (strain MJ11) (Vibrio fischeri).